Reading from the N-terminus, the 333-residue chain is D-fructose 1,6-bisphosphatase class 2/sedoheptulose 1,7-bisphosphatase (333 aa).

Mn(2+) contacts are provided by Asp-33, Glu-57, Asp-85, and Glu-88. Substrate contacts are provided by residues 88–90, Tyr-119, 164–166, and 186–188; these read EGT, RAR, and DGD. Mn(2+) is bound at residue Glu-213.

This sequence belongs to the FBPase class 2 family. As to quaternary structure, homotetramer. Mn(2+) serves as cofactor.

The enzyme catalyses beta-D-fructose 1,6-bisphosphate + H2O = beta-D-fructose 6-phosphate + phosphate. It catalyses the reaction D-sedoheptulose 1,7-bisphosphate + H2O = D-sedoheptulose 7-phosphate + phosphate. Its pathway is carbohydrate biosynthesis; Calvin cycle. Catalyzes the hydrolysis of fructose 1,6-bisphosphate (Fru 1,6-P2) and sedoheptulose 1,7-bisphosphate (Sed 1,7-P2) to fructose 6-phosphate and sedoheptulose 7-phosphate, respectively. The sequence is that of D-fructose 1,6-bisphosphatase class 2/sedoheptulose 1,7-bisphosphatase from Prochlorococcus marinus (strain MIT 9515).